We begin with the raw amino-acid sequence, 570 residues long: Sulfite reductase [NADPH] hemoprotein beta-component (570 aa).

Cysteine 434, cysteine 440, cysteine 479, and cysteine 483 together coordinate [4Fe-4S] cluster. Position 483 (cysteine 483) interacts with siroheme.

It belongs to the nitrite and sulfite reductase 4Fe-4S domain family. As to quaternary structure, alpha(8)-beta(8). The alpha component is a flavoprotein, the beta component is a hemoprotein. Requires siroheme as cofactor. It depends on [4Fe-4S] cluster as a cofactor.

It carries out the reaction hydrogen sulfide + 3 NADP(+) + 3 H2O = sulfite + 3 NADPH + 4 H(+). It participates in sulfur metabolism; hydrogen sulfide biosynthesis; hydrogen sulfide from sulfite (NADPH route): step 1/1. In terms of biological role, component of the sulfite reductase complex that catalyzes the 6-electron reduction of sulfite to sulfide. This is one of several activities required for the biosynthesis of L-cysteine from sulfate. This Salmonella enteritidis PT4 (strain P125109) protein is Sulfite reductase [NADPH] hemoprotein beta-component.